Here is a 333-residue protein sequence, read N- to C-terminus: Foldase protein PrsA (333 aa).

Residues 1 to 22 (MKSAKQIATALLVGMFTFSAVG) form the signal peptide. The N-palmitoyl cysteine moiety is linked to residue Cys23. Cys23 carries S-diacylglycerol cysteine lipidation. The PpiC domain occupies 192–283 (PNTVHLAHIL…FGWHVIKCIK (92 aa)).

This sequence belongs to the PrsA family.

Its subcellular location is the cell membrane. The catalysed reaction is [protein]-peptidylproline (omega=180) = [protein]-peptidylproline (omega=0). Plays a major role in protein secretion by helping the post-translocational extracellular folding of several secreted proteins. This is Foldase protein PrsA from Clostridium acetobutylicum (strain ATCC 824 / DSM 792 / JCM 1419 / IAM 19013 / LMG 5710 / NBRC 13948 / NRRL B-527 / VKM B-1787 / 2291 / W).